We begin with the raw amino-acid sequence, 2090 residues long: Ninein (2090 aa).

2 consecutive EF-hand domains span residues 8 to 43 (QHEA…LSLE) and 42 to 77 (LEEV…ILSR). Ser-152 carries the post-translational modification Phosphoserine. 2 EF-hand domains span residues 182–217 (WIEE…YGLQ) and 219–252 (VDGE…NGKS). Position 245-252 (245-252 (GLFKNGKS)) interacts with GTP. Phosphoserine is present on Ser-269. 300-304 (DGMGH) contacts GTP. Residues 317-352 (EGIENSQEILKALDFSLDGNINLTELTLALENELLV) form the EF-hand 5 domain. A coiled-coil region spans residues 357 to 570 (IHQAALASFK…YRAQGRVLRL (214 aa)). GTP is bound at residue 420–423 (RKLD). The disordered stretch occupies residues 574-595 (NSPSEEVEANSGGIEPEHGLGS). Coiled coils occupy residues 625–1027 (LRLE…QATS), 1068–1099 (LSLQ…QKLE), 1181–1341 (SELE…SVVQ), and 1441–1816 (QDKH…AGGK). An important for interaction with CEP170 region spans residues 802–1505 (KMETECNRRT…HDLQITCSEM (704 aa)). The segment at 1152–1190 (VRDLGSTGTSSVQRQEVKIEESEASVEGFSELENSEETR) is disordered. Ser-1550 and Ser-1837 each carry phosphoserine. Coiled-coil stretches lie at residues 1854–1885 (QENE…SNLL) and 1922–2067 (ANRK…QVSL).

In terms of assembly, homooligomer. Interacts with GSK3B/GSK3-beta via its C-terminal domain. Interacts with C14ORF166, such interaction may prevent its phosphorylation by GSK3B. Interacts with AUNIP (via N-terminus). Identified in a complex with AUNIP and AURKA. Interacts with CCDC120. Interacts (via C-terminus) with CEP250. Interacts with CEP170. Interacts with the gamma-tubulin ring complex component TUBGCP3. Interacts with gamma-tubulin. Isoform 6 does not interact with CEP170 or CEP250. Phosphorylated by AURKA/Aurora kinase A and PKA kinases but not CK2 or AURKB/ Aurora kinase B. Ubiquitous. Highly expressed in heart and skeletal muscle. Isoform 1 is more expressed than isoform 5.

Its subcellular location is the cytoplasm. It is found in the cytoskeleton. The protein localises to the microtubule organizing center. It localises to the centrosome. The protein resides in the centriole. Functionally, centrosomal protein required in the positioning and anchorage of the microtubule minus-end in epithelial cells. May also act as a centrosome maturation factor. May play a role in microtubule nucleation, by recruiting the gamma-tubulin ring complex to the centrosome. Overexpression does not perturb nucleation or elongation of microtubules but suppresses release of microtubules. Required for centriole organization and microtubule anchoring at the mother centriole. This chain is Ninein (NIN), found in Homo sapiens (Human).